We begin with the raw amino-acid sequence, 367 residues long: Glutamate 5-kinase (367 aa).

Position 10 (Lys-10) interacts with ATP. Residues Ser-50, Asp-137, and Asn-149 each contribute to the substrate site. ATP contacts are provided by residues 169 to 170 (TD) and 211 to 217 (TGGMATK). Residues 275 to 353 (AGEITVDDGA…QQISEILGYE (79 aa)) form the PUA domain.

This sequence belongs to the glutamate 5-kinase family.

It is found in the cytoplasm. It catalyses the reaction L-glutamate + ATP = L-glutamyl 5-phosphate + ADP. It functions in the pathway amino-acid biosynthesis; L-proline biosynthesis; L-glutamate 5-semialdehyde from L-glutamate: step 1/2. Its function is as follows. Catalyzes the transfer of a phosphate group to glutamate to form L-glutamate 5-phosphate. In Yersinia pseudotuberculosis serotype IB (strain PB1/+), this protein is Glutamate 5-kinase.